The following is a 591-amino-acid chain: V-type ATP synthase alpha chain (591 aa).

ATP is bound at residue 233–240 (GPFGAGKT).

The protein belongs to the ATPase alpha/beta chains family.

It catalyses the reaction ATP + H2O + 4 H(+)(in) = ADP + phosphate + 5 H(+)(out). Its function is as follows. Produces ATP from ADP in the presence of a proton gradient across the membrane. The V-type alpha chain is a catalytic subunit. The sequence is that of V-type ATP synthase alpha chain from Streptococcus pyogenes serotype M12 (strain MGAS2096).